The primary structure comprises 699 residues: Auxin response factor 1 (699 aa).

A DNA-binding region (TF-B3) is located at residues 122–224; it reads FCKILTPSDT…EQRVGVRRLV (103 aa). Disordered regions lie at residues 539–565 and 680–699; these read TTTD…DSGQ and EPHP…KTGF. The region spanning 595–684 is the PB1 domain; that stretch reads RTRIKVQMHG…DEKKIEPHPK (90 aa). The span at 687 to 699 shows a compositional bias: polar residues; that stretch reads SSANPEQDQKTGF.

This sequence belongs to the ARF family. As to quaternary structure, homodimers and heterodimers. Expressed in roots, culms, leaves and young panicles.

It is found in the nucleus. Functionally, auxin response factors (ARFs) are transcriptional factors that bind specifically to the DNA sequence 5'-TGTCTC-3' found in the auxin-responsive promoter elements (AuxREs). In Oryza sativa subsp. japonica (Rice), this protein is Auxin response factor 1 (ARF1).